Reading from the N-terminus, the 221-residue chain is Penicillin-binding protein activator LpoB (221 aa).

The signal sequence occupies residues 1–20 (MLNRMYRYALLATVALALSG). Cysteine 21 is lipidated: N-palmitoyl cysteine. A lipid anchor (S-diacylglycerol cysteine) is attached at cysteine 21. The interval 29-82 (PAPVEEAQPGTQQPTQPVPPPTQPVPTVPSVPSIPAQPGPIEHQPENATPEPKA) is disordered. Over residues 44-57 (QPVPPPTQPVPTVP) the composition is skewed to pro residues.

The protein belongs to the LpoB family. Interacts with PBP1b.

Its subcellular location is the cell outer membrane. In terms of biological role, regulator of peptidoglycan synthesis that is essential for the function of penicillin-binding protein 1B (PBP1b). The sequence is that of Penicillin-binding protein activator LpoB from Cronobacter turicensis (strain DSM 18703 / CCUG 55852 / LMG 23827 / z3032).